We begin with the raw amino-acid sequence, 159 residues long: MKHLPKHLRPRWRYFAVGIETWPDADLGRRGFQRALWYAAGNLLGDAGSADADLTLLSFSHDGGEGEAIVRARHGHVDDARATIACVSEVDDEPVGVRVRGISGTVRACEERYMGRAGGSSTQRDVAFEGAERSAVVREDAYDVWTGSAYVGAAAFDTE.

The protein belongs to the eukaryotic/archaeal RNase P protein component 2 family. In terms of assembly, consists of a catalytic RNA component and at least 4-5 protein subunits.

It localises to the cytoplasm. The catalysed reaction is Endonucleolytic cleavage of RNA, removing 5'-extranucleotides from tRNA precursor.. Part of ribonuclease P, a protein complex that generates mature tRNA molecules by cleaving their 5'-ends. The polypeptide is Ribonuclease P protein component 2 (Halorubrum lacusprofundi (strain ATCC 49239 / DSM 5036 / JCM 8891 / ACAM 34)).